We begin with the raw amino-acid sequence, 326 residues long: Peroxidase 41 (326 aa).

An N-terminal signal peptide occupies residues 1-20 (MSSVINVLFVVLVFVPSIYS). An N-linked (GlcNAc...) asparagine glycan is attached at Asn25. 4 cysteine pairs are disulfide-bonded: Cys35–Cys116, Cys68–Cys73, Cys122–Cys318, and Cys201–Cys228. Catalysis depends on His66, which acts as the Proton acceptor. Residues Asp67, Gly72, Asp74, and Ser76 each coordinate Ca(2+). Substrate is bound at residue Pro164. The N-linked (GlcNAc...) asparagine glycan is linked to Asn167. His194 contacts heme b. Thr195 lines the Ca(2+) pocket. Asn234 is a glycosylation site (N-linked (GlcNAc...) asparagine). Ca(2+) is bound by residues Asp242, Thr245, and Asp250. A glycan (N-linked (GlcNAc...) asparagine) is linked at Asn286.

This sequence belongs to the peroxidase family. Classical plant (class III) peroxidase subfamily. Heme b is required as a cofactor. Ca(2+) serves as cofactor.

The protein localises to the secreted. The enzyme catalyses 2 a phenolic donor + H2O2 = 2 a phenolic radical donor + 2 H2O. Functionally, removal of H(2)O(2), oxidation of toxic reductants, biosynthesis and degradation of lignin, suberization, auxin catabolism, response to environmental stresses such as wounding, pathogen attack and oxidative stress. These functions might be dependent on each isozyme/isoform in each plant tissue. The protein is Peroxidase 41 (PER41) of Arabidopsis thaliana (Mouse-ear cress).